The primary structure comprises 158 residues: Siroheme decarboxylase beta subunit (158 aa).

The protein belongs to the Ahb/Nir family. Forms a heterodimer composed of AhbA and AhbB.

The catalysed reaction is siroheme + 2 H(+) = 12,18-didecarboxysiroheme + 2 CO2. Its pathway is porphyrin-containing compound metabolism; protoheme biosynthesis. Functionally, involved in siroheme-dependent heme b biosynthesis. Catalyzes the decarboxylation of siroheme into didecarboxysiroheme. This chain is Siroheme decarboxylase beta subunit, found in Oleidesulfovibrio alaskensis (strain ATCC BAA-1058 / DSM 17464 / G20) (Desulfovibrio alaskensis).